The primary structure comprises 90 residues: Small ribosomal subunit protein bS18 (90 aa).

Belongs to the bacterial ribosomal protein bS18 family. In terms of assembly, part of the 30S ribosomal subunit. Forms a tight heterodimer with protein bS6.

Functionally, binds as a heterodimer with protein bS6 to the central domain of the 16S rRNA, where it helps stabilize the platform of the 30S subunit. This is Small ribosomal subunit protein bS18 from Bordetella petrii (strain ATCC BAA-461 / DSM 12804 / CCUG 43448).